A 139-amino-acid polypeptide reads, in one-letter code: Gas vesicle protein A (139 aa).

Positions 113–139 are disordered; that stretch reads EKLGDMLTSDEPEPRKATRVRSRRADR. Over residues 129–139 the composition is skewed to basic residues; the sequence is ATRVRSRRADR.

Belongs to the gas vesicle GvpA family. As to quaternary structure, the gas vesicle shell is 2 nm thick and consists of a single layer of this protein. It forms helical ribs nearly perpendicular to the long axis of the vesicle.

The protein resides in the gas vesicle shell. Functionally, gas vesicles are hollow, gas filled proteinaceous nanostructures found in some microorganisms. During planktonic growth they allow positioning of the organism at a favorable depth for light or nutrient acquisition. GvpA forms the protein shell. This chain is Gas vesicle protein A, found in Mycobacterium sp. (strain JLS).